Consider the following 788-residue polypeptide: Multi-functional prenyltransferase ltmE (788 aa).

Substrate contacts are provided by Lys18 and His51. Asp58 provides a ligand contact to Mg(2+). 6 residues coordinate substrate: Arg67, Lys151, Thr152, Gln182, Asn189, and Lys199. A disordered region spans residues 283–337 (DTLDGDDLTRPSTITQHEQDDHVDRAAIDAKSDASGSSNKSLTPPETAPTTDTLS). Basic and acidic residues predominate over residues 299–314 (HEQDDHVDRAAIDAKS). Over residues 316-337 (ASGSSNKSLTPPETAPTTDTLS) the composition is skewed to polar residues. Residue 404–405 (MA) coordinates L-tryptophan. Arg427, Arg599, Lys601, Tyr603, and Tyr687 together coordinate substrate.

The protein in the N-terminal section; belongs to the FPP/GGPP synthase family. In the C-terminal section; belongs to the tryptophan dimethylallyltransferase family. Requires Mg(2+) as cofactor.

It functions in the pathway secondary metabolite biosynthesis. In terms of biological role, multi-functional prenyltransferase; part of the gene cluster that mediates the biosynthesis of lolitrems, indole-diterpene mycotoxins that are potent tremorgens in mammals, and are synthesized by clavicipitaceous fungal endophytes in association with their grass hosts. The geranylgeranyl diphosphate (GGPP) synthase ltmG is proposed to catalyze the first step in lolitrem biosynthesis. LtmG catalyzes a series of iterative condensations of isopentenyl diphosphate (IPP) with dimethylallyl diphosphate (DMAPP), geranyl diphosphate (GPP), and farnesyl diphosphate (FPP), to form GGPP. GGPP then condenses with indole-3-glycerol phosphate to form 3-geranylgeranylindole, an acyclic intermediate, to be incorporated into paxilline. Either ltmG or ltmC could be responsible for this step, as both are putative prenyl transferases. The FAD-dependent monooxygenase ltmM then catalyzes the epoxidation of the two terminal alkenes of the geranylgeranyl moiety, which is subsequently cyclized by ltmB, to paspaline. The cytochrome P450 monooxygenases ltmQ and ltmP can sequentially oxidize paspaline to terpendole E and terpendole F. Alternatively, ltmP converts paspaline to an intermediate which is oxidized by ltmQ to terpendole F. LtmF, ltmK, ltmE and ltmJ appear to be unique to the epichloe endophytes. The prenyltransferase ltmF is involved in the 27-hydroxyl-O-prenylation. The cytochrome P450 monooxygenase ltmK is required for the oxidative acetal ring formation. The multi-functional prenyltransferase ltmE is required for C20- and C21-prenylations of the indole ring of paspalanes and acts together with the cytochrome P450 monooxygenase ltmJ to yield lolitremanes by multiple oxidations and ring closures. The stereoisomer pairs of lolitriol and lolitrem N or lolitrem B and lolitrem F may be attributed to variations in the way in which ring closure can occur under the action of ltmJ. While the major product of this pathway is lolitrem B, the prenyl transferases and cytochrome P450 monooxygenases identified in this pathway have a remarkable versatility in their regio- and stereo-specificities to generate a diverse range of metabolites that are products of a metabolic grid rather than a linear pathway. This Epichloe festucae var. lolii (Neotyphodium lolii) protein is Multi-functional prenyltransferase ltmE.